Reading from the N-terminus, the 354-residue chain is MKNKNKRLLVMAGGTGGHVFPGLAVAKQLQSEGWEIRWLGTEDRMEADLVPKHGIEIDFIKVKGLRGQGLKKLLIAPFQIIGAILQAKKHIQAWQPDVVLGMGGYVSGPGGIAAWLSGIPVVLHEQNAVAGLTNQWLSKIAKRVFQAFPGAFPNADVVGNPVREDVCQLPHPSERFAERNGPIRVLIMGGSQGARILNATLPEVLPKLNHSVEIWHQAGKGNQETVNNAYKDNGITDAKVTEFIDDVAAAYAWADVLVCRSGALTVSEVSAAGVGSVFIPFMHKDRQQALNADHLVQCGAAKMIEQQDLTVQSLVDTLNGLERPKLLEMACNARNAAIIDADVRVATAIKSLAK.

Residues 15 to 17 (TGG), Asn-127, Arg-163, Ser-191, Ile-244, 263 to 268 (ALTVSE), and Gln-288 contribute to the UDP-N-acetyl-alpha-D-glucosamine site.

It belongs to the glycosyltransferase 28 family. MurG subfamily.

The protein localises to the cell inner membrane. It carries out the reaction di-trans,octa-cis-undecaprenyl diphospho-N-acetyl-alpha-D-muramoyl-L-alanyl-D-glutamyl-meso-2,6-diaminopimeloyl-D-alanyl-D-alanine + UDP-N-acetyl-alpha-D-glucosamine = di-trans,octa-cis-undecaprenyl diphospho-[N-acetyl-alpha-D-glucosaminyl-(1-&gt;4)]-N-acetyl-alpha-D-muramoyl-L-alanyl-D-glutamyl-meso-2,6-diaminopimeloyl-D-alanyl-D-alanine + UDP + H(+). It functions in the pathway cell wall biogenesis; peptidoglycan biosynthesis. Cell wall formation. Catalyzes the transfer of a GlcNAc subunit on undecaprenyl-pyrophosphoryl-MurNAc-pentapeptide (lipid intermediate I) to form undecaprenyl-pyrophosphoryl-MurNAc-(pentapeptide)GlcNAc (lipid intermediate II). In Aliivibrio salmonicida (strain LFI1238) (Vibrio salmonicida (strain LFI1238)), this protein is UDP-N-acetylglucosamine--N-acetylmuramyl-(pentapeptide) pyrophosphoryl-undecaprenol N-acetylglucosamine transferase.